The chain runs to 780 residues: ATP-dependent 6-phosphofructokinase, liver type (780 aa).

A2 is modified (N-acetylalanine). The tract at residues 2 to 390 (AAVDLEKLRA…NWNIYKLLAH (389 aa)) is N-terminal catalytic PFK domain 1. Residues G25, 88–89 (RC), and 118–121 (GDGS) each bind ATP. Residue D119 coordinates Mg(2+). Substrate-binding positions include 164-166 (SID), R201, 208-210 (MGR), E264, R292, and 298-301 (HVQR). Catalysis depends on D166, which acts as the Proton acceptor. Residue S377 is modified to Phosphoserine. Residues 391-400 (QKPPKEKSNF) form an interdomain linker region. Residues 401–780 (SLAILNVGAP…RRTLSMDKGF (380 aa)) are C-terminal regulatory PFK domain 2. Residues R470, 527–531 (TISNN), R565, 572–574 (MGG), and E628 contribute to the beta-D-fructose 2,6-bisphosphate site. An O-linked (GlcNAc) serine glycan is attached at S529. A Phosphotyrosine modification is found at Y640. Residues R654, 660–663 (HLQQ), and R734 each bind beta-D-fructose 2,6-bisphosphate. The residue at position 775 (S775) is a Phosphoserine.

This sequence belongs to the phosphofructokinase type A (PFKA) family. ATP-dependent PFK group I subfamily. Eukaryotic two domain clade 'E' sub-subfamily. As to quaternary structure, homo- and heterotetramers. Phosphofructokinase (PFK) enzyme functions as a tetramer composed of different combinations of 3 types of subunits, called PFKM (where M stands for Muscle), PFKL (Liver) and PFKP (Platelet). The composition of the PFK tetramer differs according to the tissue type it is present in. In muscles, it is composed of 4 PFKM subunits (also called M4). In the liver, the predominant form is a tetramer of PFKL subunits (L4). In erythrocytes, both PFKM and PFKL subunits randomly tetramerize to form M4, L4 and other combinations (ML3, M2L2, M3L). The kinetic and regulatory properties of the tetrameric enzyme are dependent on the subunit composition, hence can vary across tissues. Mg(2+) serves as cofactor. In terms of processing, glcNAcylation at Ser-529 by OGT decreases enzyme activity, leading to redirect glucose flux through the oxidative pentose phosphate pathway. Glycosylation is stimulated by both hypoxia and glucose deprivation.

It is found in the cytoplasm. The enzyme catalyses beta-D-fructose 6-phosphate + ATP = beta-D-fructose 1,6-bisphosphate + ADP + H(+). It functions in the pathway carbohydrate degradation; glycolysis; D-glyceraldehyde 3-phosphate and glycerone phosphate from D-glucose: step 3/4. Allosterically activated by ADP, AMP, or fructose 2,6-bisphosphate, and allosterically inhibited by ATP or citrate. GlcNAcylation by OGT overcomes allosteric regulation. In terms of biological role, catalyzes the phosphorylation of D-fructose 6-phosphate to fructose 1,6-bisphosphate by ATP, the first committing step of glycolysis. Negatively regulates the phagocyte oxidative burst in response to bacterial infection by controlling cellular NADPH biosynthesis and NADPH oxidase-derived reactive oxygen species. Upon macrophage activation, drives the metabolic switch toward glycolysis, thus preventing glucose turnover that produces NADPH via pentose phosphate pathway. In Homo sapiens (Human), this protein is ATP-dependent 6-phosphofructokinase, liver type.